The primary structure comprises 415 residues: Tyrosine--tRNA ligase (415 aa).

Y34 serves as a coordination point for L-tyrosine. The short motif at 39–48 (PTADSLHLGH) is the 'HIGH' region element. Positions 164 and 168 each coordinate L-tyrosine. A 'KMSKS' region motif is present at residues 226–230 (KFGKS). K229 serves as a coordination point for ATP. One can recognise an S4 RNA-binding domain in the interval 348 to 415 (KNIVDFLVDG…KKKYFLGKIK (68 aa)).

It belongs to the class-I aminoacyl-tRNA synthetase family. TyrS type 1 subfamily. Homodimer.

The protein localises to the cytoplasm. The catalysed reaction is tRNA(Tyr) + L-tyrosine + ATP = L-tyrosyl-tRNA(Tyr) + AMP + diphosphate + H(+). Its function is as follows. Catalyzes the attachment of tyrosine to tRNA(Tyr) in a two-step reaction: tyrosine is first activated by ATP to form Tyr-AMP and then transferred to the acceptor end of tRNA(Tyr). The sequence is that of Tyrosine--tRNA ligase from Leuconostoc citreum (strain KM20).